The primary structure comprises 173 residues: Bifunctional protein PyrR (173 aa).

A PRPP-binding motif is present at residues 93–105; sequence VILVDDVLYTGRT.

This sequence belongs to the purine/pyrimidine phosphoribosyltransferase family. PyrR subfamily. In terms of assembly, homodimer and homohexamer; in equilibrium.

It catalyses the reaction UMP + diphosphate = 5-phospho-alpha-D-ribose 1-diphosphate + uracil. Functionally, regulates transcriptional attenuation of the pyrimidine nucleotide (pyr) operon by binding in a uridine-dependent manner to specific sites on pyr mRNA. This disrupts an antiterminator hairpin in the RNA and favors formation of a downstream transcription terminator, leading to a reduced expression of downstream genes. Its function is as follows. Also displays a weak uracil phosphoribosyltransferase activity which is not physiologically significant. In Streptococcus thermophilus (strain CNRZ 1066), this protein is Bifunctional protein PyrR.